The chain runs to 601 residues: Alpha-terpineol synthase, chloroplastic (601 aa).

The transit peptide at 1-47 (MSTISIHHVGILRNPLHSKSKRASINKPWSLSLPRSSSASRLVEPCR) directs the protein to the chloroplast. Mn(2+)-binding residues include aspartate 357 and aspartate 361. The short motif at 357-361 (DDVYD) is the DDXXD motif element. Homodimerization stretches follow at residues 363-369 (YGTLDEL) and 435-471 (EAEW…ELSL). Mn(2+)-binding residues include aspartate 499 and glutamate 507.

Belongs to the terpene synthase family. As to quaternary structure, homodimer. It depends on Mn(2+) as a cofactor. Requires Mg(2+) as cofactor.

Its subcellular location is the plastid. The protein localises to the chloroplast. It catalyses the reaction (2E)-geranyl diphosphate + H2O = (S)-alpha-terpineol + diphosphate. It carries out the reaction (2E)-geranyl diphosphate + H2O = (R)-alpha-terpineol + diphosphate. It participates in secondary metabolite biosynthesis; terpenoid biosynthesis. Involved in the biosynthesis of phenolic monoterpenes natural products. Monoterpene synthase which catalyzes the conversion of geranyl diphosphate (GPP) to alpha-terpineol (isomer is not determined). This chain is Alpha-terpineol synthase, chloroplastic, found in Thymus caespititius (Cretan thyme).